Reading from the N-terminus, the 408-residue chain is Lipoate--protein ligase 1 (408 aa).

A mitochondrion-targeting transit peptide spans 1-18; sequence MKRIFRLVRRCHYSTEKR. In terms of domain architecture, BPL/LPL catalytic spans 60-242; the sequence is KFNEPILFLW…EFTKFYEQNY (183 aa). Residues Arg-102, Gly-107, and Tyr-110 each coordinate ATP. Gly-107 is a (R)-lipoate binding site. Position 153 (Asp-153) interacts with Mg(2+). Residue Lys-160 coordinates ATP. A (R)-lipoate-binding site is contributed by Lys-160.

It belongs to the LplA family.

The protein localises to the mitochondrion. It carries out the reaction L-lysyl-[lipoyl-carrier protein] + (R)-lipoate + ATP = N(6)-[(R)-lipoyl]-L-lysyl-[lipoyl-carrier protein] + AMP + diphosphate + H(+). The enzyme catalyses (R)-dihydrolipoate + L-lysyl-[lipoyl-carrier protein] + ATP = N(6)-[(R)-dihydrolipoyl]-L-lysyl-[lipoyl-carrier protein] + AMP + diphosphate + H(+). The catalysed reaction is (R)-dihydrolipoate + ATP + H(+) = N(6)-[(R)-dihydrolipoyl]-5'-AMP + diphosphate. It catalyses the reaction N(6)-[(R)-dihydrolipoyl]-5'-AMP + L-lysyl-[lipoyl-carrier protein] = N(6)-[(R)-dihydrolipoyl]-L-lysyl-[lipoyl-carrier protein] + AMP + 2 H(+). It participates in protein modification; protein lipoylation via exogenous pathway; protein N(6)-(lipoyl)lysine from lipoate: step 1/2. The protein operates within protein modification; protein lipoylation via exogenous pathway; protein N(6)-(lipoyl)lysine from lipoate: step 2/2. With respect to regulation, inhibited by the lipoate analog 8-bromo-octanoate (BrO). Catalytic activity is increased in the presence of Mg(2+). Functionally, catalyzes both the ATP-dependent activation of exogenously supplied lipoate to lipoyl-AMP and the transfer of the activated lipoyl onto the lipoyl domains of lipoate-dependent enzymes. In the mitochondrion, functions as a redox switch between two lipoylation routes. Senses the oxidation state of lipoate and determines which downstream enzymes will be lipoylated. In low reducing conditions, uses lipoate in its oxidized ring form to lipoylate glycine cleavage system H-protein GCVH. In high reducing conditions and together with LipL2, uses reduced lipoate (dihydrolipoate) to lipoylate the E2 component of the branched chain alpha-ketoacid dehydrogenase complex BCKDH-E2/BCDH and the E2 component of the alpha-ketoglutarate dehydrogenase complex KDH. LipL1 is responsible for catalysing the activation of lipoate, forming lipoyl-AMP while LipL2 is required but is not capable of catalyzing this reaction. The chain is Lipoate--protein ligase 1 from Plasmodium falciparum (isolate 3D7).